A 675-amino-acid polypeptide reads, in one-letter code: MEVIRYPNSPFKLHQPFPPAGDQPTAIAGLIEGLSDGLAYQTLLGVTGSGKTYTMANVIAQSGRPAIIMAHNKTLAAQLYAEMREFFPENAVEYFVSYYDYYQPEAYVPSRDLFIEKDSAINEHIEQMRLSATKNLMTRDDVIIVATVSAIYGIGDPTEYQQMVLSVKEGDTIEQRDIIATLVSMQYERGDLDFKRGSFRVRGDVIDVYPAESSENALRISLFDDEIDRLDMFDPLSGSLHQRVGRYTVFPSSHYVTPRDTVLRACESIKEELRERIEFFAREQRPVEQQRIEQRTRFDLEMLYEMGFCKGIENYSRHFSGKKEGEPPPTLMDYLPDNAIMFIDESHVTVTQIGGMYKGDASRKQNLVDYGFRLPSARDNRPLKFHEFEKVMPQTVFVSATPAKYEEEHAGQVVEQVVRPTGLVDPQTIIRPVATQVDDLMSEINDRIQKGERVLVTTLTKRMAEQLTDYYSELGIKVRYLHSDIDTVERVEIIRDLRLGLFDVLVGINLLREGLDIPEVSLVAILDADKEGFLRSHRSLIQTIGRAARNVNGVAILYADKITDSMKAAVDETERRREKQIKFNEEHGIVPQQIKKQVKDIIDGVYHEEDSGKGRRQGKNKVKVGEIHNEEDAIKEIAKLEKAMQQAARDLQFEEAAVLRDRISNIKENLLFGAE.

One can recognise a Helicase ATP-binding domain in the interval 32-417; sequence EGLSDGLAYQ…EHAGQVVEQV (386 aa). 45–52 is a binding site for ATP; sequence GVTGSGKT. The Beta-hairpin motif lies at 98-121; that stretch reads YYDYYQPEAYVPSRDLFIEKDSAI. Residues 436-602 form the Helicase C-terminal domain; sequence QVDDLMSEIN…QIKKQVKDII (167 aa). Residues 634 to 669 form the UVR domain; sequence IKEIAKLEKAMQQAARDLQFEEAAVLRDRISNIKEN.

The protein belongs to the UvrB family. As to quaternary structure, forms a heterotetramer with UvrA during the search for lesions. Interacts with UvrC in an incision complex.

It localises to the cytoplasm. Functionally, the UvrABC repair system catalyzes the recognition and processing of DNA lesions. A damage recognition complex composed of 2 UvrA and 2 UvrB subunits scans DNA for abnormalities. Upon binding of the UvrA(2)B(2) complex to a putative damaged site, the DNA wraps around one UvrB monomer. DNA wrap is dependent on ATP binding by UvrB and probably causes local melting of the DNA helix, facilitating insertion of UvrB beta-hairpin between the DNA strands. Then UvrB probes one DNA strand for the presence of a lesion. If a lesion is found the UvrA subunits dissociate and the UvrB-DNA preincision complex is formed. This complex is subsequently bound by UvrC and the second UvrB is released. If no lesion is found, the DNA wraps around the other UvrB subunit that will check the other stand for damage. This chain is UvrABC system protein B, found in Neisseria gonorrhoeae (strain ATCC 700825 / FA 1090).